The chain runs to 326 residues: Target of rapamycin complex subunit lst8 (326 aa).

WD repeat units lie at residues 1-37 (MNSN…CTRT), 40-80 (HQDS…PVIN), 83-122 (GVSK…LQCQ), 126-165 (QVNA…NEQL), 168-207 (ETDV…GEDL), 218-257 (AHKR…LMTE), and 268-309 (TSRG…REYS).

It belongs to the WD repeat LST8 family. Part of the mechanistic target of rapamycin complex 1 (mTORC1) which contains MTOR, MLST8 and RPTOR. Component of the mechanistic target of rapamycin complex 2 (mTORC2), consisting in two heterotretramers composed of MTOR, MLST8, RICTOR and MAPKAP1/SIN1.

The protein localises to the lysosome membrane. The protein resides in the cytoplasm. Subunit of both mTORC1 and mTORC2, which regulates cell growth and survival in response to nutrient and hormonal signals. mTORC1 is activated in response to growth factors or amino acids. In response to nutrients, mTORC1 is recruited to the lysosome membrane and promotes protein, lipid and nucleotide synthesis by phosphorylating several substrates, such as ribosomal protein S6 kinase (RPS6KB1 and RPS6KB2) and EIF4EBP1 (4E-BP1). In the same time, it inhibits catabolic pathways by phosphorylating the autophagy initiation components ULK1 and ATG13, as well as transcription factor TFEB, a master regulators of lysosomal biogenesis and autophagy. The mTORC1 complex is inhibited in response to starvation and amino acid depletion. Within mTORC1, MLST8 interacts directly with MTOR and enhances its kinase activity. In nutrient-poor conditions, stabilizes the MTOR-RPTOR interaction and favors RPTOR-mediated inhibition of MTOR activity. As part of the mTORC2 complex, transduces signals from growth factors to pathways involved in proliferation, cytoskeletal organization, lipogenesis and anabolic output. mTORC2 is also activated by growth factors, but seems to be nutrient-insensitive. In response to growth factors, mTORC2 phosphorylates and activates AGC protein kinase family members, including AKT (AKT1, AKT2 and AKT3), PKC (PRKCA, PRKCB and PRKCE) and SGK1. mTORC2 functions upstream of Rho GTPases to regulate the actin cytoskeleton, probably by activating one or more Rho-type guanine nucleotide exchange factors. mTORC2 promotes the serum-induced formation of stress-fibers or F-actin. Within mTORC2, MLST8 acts as a bridge between MAPKAP1/SIN1 and MTOR. The protein is Target of rapamycin complex subunit lst8 (mlst8) of Xenopus tropicalis (Western clawed frog).